The chain runs to 504 residues: Probable cytosol aminopeptidase (504 aa).

Mn(2+) is bound by residues Lys-272 and Asp-277. Lys-284 is a catalytic residue. Mn(2+)-binding residues include Asp-295, Asp-354, and Glu-356. Arg-358 is an active-site residue.

Belongs to the peptidase M17 family. Mn(2+) serves as cofactor.

It localises to the cytoplasm. The catalysed reaction is Release of an N-terminal amino acid, Xaa-|-Yaa-, in which Xaa is preferably Leu, but may be other amino acids including Pro although not Arg or Lys, and Yaa may be Pro. Amino acid amides and methyl esters are also readily hydrolyzed, but rates on arylamides are exceedingly low.. It carries out the reaction Release of an N-terminal amino acid, preferentially leucine, but not glutamic or aspartic acids.. Its function is as follows. Presumably involved in the processing and regular turnover of intracellular proteins. Catalyzes the removal of unsubstituted N-terminal amino acids from various peptides. The sequence is that of Probable cytosol aminopeptidase from Chlorobaculum tepidum (strain ATCC 49652 / DSM 12025 / NBRC 103806 / TLS) (Chlorobium tepidum).